The primary structure comprises 469 residues: Arginine biosynthesis bifunctional protein ArgJ, chloroplastic (469 aa).

Substrate contacts are provided by Thr-213, Lys-239, Thr-250, Glu-337, Asn-464, and Thr-469. The active-site Nucleophile is Thr-250.

Belongs to the ArgJ family. Heterodimer of an alpha and a beta chain.

The protein localises to the plastid. The protein resides in the chloroplast. The enzyme catalyses N(2)-acetyl-L-ornithine + L-glutamate = N-acetyl-L-glutamate + L-ornithine. It catalyses the reaction L-glutamate + acetyl-CoA = N-acetyl-L-glutamate + CoA + H(+). The protein operates within amino-acid biosynthesis; L-arginine biosynthesis; L-ornithine and N-acetyl-L-glutamate from L-glutamate and N(2)-acetyl-L-ornithine (cyclic): step 1/1. It functions in the pathway amino-acid biosynthesis; L-arginine biosynthesis; N(2)-acetyl-L-ornithine from L-glutamate: step 1/4. Catalyzes two activities which are involved in the cyclic version of arginine biosynthesis: the synthesis of acetylglutamate from glutamate and acetyl-CoA, and of ornithine by transacetylation between acetylornithine and glutamate. The chain is Arginine biosynthesis bifunctional protein ArgJ, chloroplastic from Ricinus communis (Castor bean).